The chain runs to 561 residues: Sesquiterpene synthase 1 (561 aa).

Residues aspartate 313, aspartate 317, aspartate 458, and glutamate 466 each contribute to the Mg(2+) site. Residues 313–317 (DDIYD) carry the DDXXD motif motif.

Belongs to the terpene synthase family. Tpsa subfamily. Requires Mn(2+) as cofactor. The cofactor is Mg(2+).

The protein localises to the cytoplasm. It catalyses the reaction (2E,6E)-farnesyl diphosphate = (1S,8aR)-delta-cadinene + diphosphate. It functions in the pathway secondary metabolite biosynthesis; terpenoid biosynthesis. In terms of biological role, involved in the biosynthesis of delta-cadinene. The protein is Sesquiterpene synthase 1 (STS1) of Thapsia garganica (Deadly carrot).